The chain runs to 253 residues: PAXIP1-associated glutamate-rich protein 1 (253 aa).

Disordered stretches follow at residues Met1 to Pro109 and Gln128 to Tyr253. The span at Glu51–Ser62 shows a compositional bias: basic and acidic residues. The tract at residues Tyr116–Glu160 is sufficient for interaction with NCOA1. Thr138 is subject to Phosphothreonine. Residues Gln142 to Glu159 show a composition bias toward acidic residues. 2 positions are modified to phosphoserine: Ser143 and Ser148. The tract at residues Lys161–Tyr253 is sufficient for interaction with ESR1. The segment covering Gln195–Arg223 has biased composition (basic and acidic residues). Ser237 bears the Phosphoserine mark.

As to quaternary structure, component of the KMT2 family MLL2/MLL3 complex, at least composed of the histone methyltransferases KMT2D and/or KMT2C, the common complex subunits ASH2L, RBBP5, WDR5 and DPY30, and the complex type-specific subunits PAXIP1/PTIP, PAGR1, NCOA6 and KDM6A; PAXIP1 is required for the association with the MLL2/MLL3 complex. Forms a constitutive complex with PAXIP1/PTIP independently of the MLL2/MLL3 complex. Interacts with NCOA1, ESR1, NR3C1, AR.

It localises to the nucleus. In terms of biological role, its association with the histone methyltransferase MLL2/MLL3 complex is suggesting a role in epigenetic transcriptional activation. However, in association with PAXIP1/PTIP is proposed to function at least in part independently of the MLL2/MLL3 complex. Proposed to be recruited by PAXIP1 to sites of DNA damage where the PAGR1:PAXIP1 complex is required for cell survival in response to DNA damage independently of the MLL2/MLL3 complex. However, its function in DNA damage has been questioned. During immunoglobulin class switching in activated B-cells is involved in transcription regulation of downstream switch regions at the immunoglobulin heavy-chain (Igh) locus independently of the MLL2/MLL3 complex. Involved in both estrogen receptor-regulated gene transcription and estrogen-stimulated G1/S cell-cycle transition. Acts as a transcriptional cofactor for nuclear hormone receptors. Inhibits the induction properties of several steroid receptors such as NR3C1, AR and PPARG; the mechanism of inhibition appears to be gene-dependent. The polypeptide is PAXIP1-associated glutamate-rich protein 1 (PAGR1) (Bos taurus (Bovine)).